Consider the following 328-residue polypeptide: D-cysteine desulfhydrase (328 aa).

Lys-51 carries the N6-(pyridoxal phosphate)lysine modification.

Belongs to the ACC deaminase/D-cysteine desulfhydrase family. Homodimer. Pyridoxal 5'-phosphate serves as cofactor.

The catalysed reaction is D-cysteine + H2O = hydrogen sulfide + pyruvate + NH4(+) + H(+). In terms of biological role, catalyzes the alpha,beta-elimination reaction of D-cysteine and of several D-cysteine derivatives. It could be a defense mechanism against D-cysteine. This chain is D-cysteine desulfhydrase, found in Escherichia fergusonii (strain ATCC 35469 / DSM 13698 / CCUG 18766 / IAM 14443 / JCM 21226 / LMG 7866 / NBRC 102419 / NCTC 12128 / CDC 0568-73).